Reading from the N-terminus, the 302-residue chain is UDP-N-acetylenolpyruvoylglucosamine reductase (302 aa).

Residues 31–213 (KIGGPADFLI…KKIREFREKR (183 aa)) enclose the FAD-binding PCMH-type domain. Arginine 176 is an active-site residue. Serine 226 functions as the Proton donor in the catalytic mechanism. Residue glutamate 296 is part of the active site.

This sequence belongs to the MurB family. FAD is required as a cofactor.

The protein localises to the cytoplasm. It catalyses the reaction UDP-N-acetyl-alpha-D-muramate + NADP(+) = UDP-N-acetyl-3-O-(1-carboxyvinyl)-alpha-D-glucosamine + NADPH + H(+). It participates in cell wall biogenesis; peptidoglycan biosynthesis. Cell wall formation. This Carboxydothermus hydrogenoformans (strain ATCC BAA-161 / DSM 6008 / Z-2901) protein is UDP-N-acetylenolpyruvoylglucosamine reductase.